The sequence spans 619 residues: 4-hydroxyphenylalkanoate adenylyltransferase (619 aa).

The protein belongs to the ATP-dependent AMP-binding enzyme family.

It carries out the reaction 17-(4-hydroxyphenyl)heptadecanoate + holo-[(phenol)carboxyphthiodiolenone synthase] + ATP = 17-(4-hydroxyphenyl)heptadecanoyl-[(phenol)carboxyphthiodiolenone synthase] + AMP + diphosphate. The catalysed reaction is 19-(4-hydroxyphenyl)nonadecanoate + holo-[(phenol)carboxyphthiodiolenone synthase] + ATP = 19-(4-hydroxyphenyl)nonadecanoyl-[(phenol)carboxyphthiodiolenone synthase] + AMP + diphosphate. The protein operates within lipid metabolism; fatty acid biosynthesis. In terms of biological role, catalyzes the activation of long-chain fatty acids as acyl-adenylates (acyl-AMP), which are then transferred to the multifunctional polyketide synthase PpsA for further chain extension. Involved in the biosynthesis of phenolphthiocerol, which is an important intermediate in the biosynthesis of phenolic glycolipid (PGL), also called mycosid B. This is 4-hydroxyphenylalkanoate adenylyltransferase (fadD29) from Mycobacterium bovis (strain ATCC BAA-935 / AF2122/97).